The sequence spans 855 residues: Suppressor of tumorigenicity 14 protein homolog (855 aa).

Residues 1–55 are Cytoplasmic-facing; that stretch reads MGSNRGRKAGGGSQDFGAGLKYNSRLENMNGFEEGVEFLPANNAKKVEKRGPRRW. S13 bears the Phosphoserine mark. The helical; Signal-anchor for type II membrane protein transmembrane segment at 56–76 threads the bilayer; that stretch reads VVLVAVLFSFLLLSLMAGLLV. Topologically, residues 77–855 are extracellular; that stretch reads WHFHYRNVRV…RDWIKEHTGV (779 aa). An SEA domain is found at 86–203; the sequence is VQKVFNGHLR…TSVVAFPIDP (118 aa). N107 is a glycosylation site (N-linked (GlcNAc...) asparagine). A disulfide bond links C214 and C244. CUB domains lie at 214–331 and 340–444; these read CSFA…EATF and CGGF…LAEY. N-linked (GlcNAc...) asparagine glycans are attached at residues N302 and N365. 2 disulfides stabilise this stretch: C340–C366 and C397–C410. N421 carries an N-linked (GlcNAc...) asparagine glycan. LDL-receptor class A domains are found at residues 451–488, 489–522, 523–561, and 565–604; these read DPCP…YCRC, NATH…DEEG, CSCP…SCDS, and VSCT…NCDC. Cystine bridges form between C453-C464, C459-C477, C471-C486, C488-C501, C496-C514, C508-C523, C525-C537, C532-C550, C544-C559, C567-C579, C574-C593, C587-C602, and C641-C657. N489 carries an N-linked (GlcNAc...) asparagine glycan. The Peptidase S1 domain occupies 615–854; the sequence is VVGGTNADEG…VRDWIKEHTG (240 aa). Residues H656 and D711 each act as charge relay system in the active site. N-linked (GlcNAc...) asparagine glycosylation occurs at N772. Intrachain disulfides connect C776–C790 and C801–C830. S805 functions as the Charge relay system in the catalytic mechanism.

This sequence belongs to the peptidase S1 family. In terms of assembly, interacts with CDCP1. May interact with TMEFF1. As to expression, highly expressed in intestine, kidney, lung, and thymus. Not expressed in skeletal muscle, liver, heart, testis and brain.

It localises to the membrane. It carries out the reaction Cleaves various synthetic substrates with Arg or Lys at the P1 position and prefers small side-chain amino acids, such as Ala and Gly, at the P2 position.. Its function is as follows. Exhibits trypsin-like activity as defined by cleavage of synthetic substrates with Arg or Lys as the P1 site. Involved in the terminal differentiation of keratinocytes through prostasin (PRSS8) activation and filaggrin (FLG) processing. Proteolytically cleaves and therefore activates TMPRSS13. The protein is Suppressor of tumorigenicity 14 protein homolog (St14) of Mus musculus (Mouse).